The sequence spans 561 residues: Urocanate hydratase (561 aa).

NAD(+)-binding positions include 52-53 (GG), Q130, 176-178 (GMG), E196, R201, 242-243 (NA), 263-267 (QTSAH), 273-274 (YL), and Y322. C410 is an active-site residue. G492 contributes to the NAD(+) binding site.

It belongs to the urocanase family. NAD(+) is required as a cofactor.

The protein resides in the cytoplasm. The catalysed reaction is 4-imidazolone-5-propanoate = trans-urocanate + H2O. Its pathway is amino-acid degradation; L-histidine degradation into L-glutamate; N-formimidoyl-L-glutamate from L-histidine: step 2/3. Catalyzes the conversion of urocanate to 4-imidazolone-5-propionate. The chain is Urocanate hydratase from Citrobacter koseri (strain ATCC BAA-895 / CDC 4225-83 / SGSC4696).